The chain runs to 319 residues: MATTKPYRVLLYYMYTTIENPEEFAAEHLEFCNSLELKGRILVAKEGINGTCSGTVEQTEKYMEAMNNDPRFDGIVFKIDEADGHAFKKMHVRPRPELVTLRLEDDINPHEITGKYLEPKDFYEAMKQEDTVIIDARNDYEFDLGHFKGAIKPDIESFRELPDWIRENKEVLEGKKILTYCTGGIRCEKFSGWLVREGYEDVSQLHGGIVTYGKDPEVQGELWDGQCYVFDERIAVPVNQKEHVIVGKDHFTGEPCERYVNCANPECNKKILCSEENEAKYLRACSHECRVSPRNRYVIQHELTEEQVAAALEQIEAGK.

Positions 127 to 221 (KQEDTVIIDA…YGKDPEVQGE (95 aa)) constitute a Rhodanese domain. Residue C181 is the Cysteine persulfide intermediate of the active site.

The protein belongs to the TrhO family.

It catalyses the reaction uridine(34) in tRNA + AH2 + O2 = 5-hydroxyuridine(34) in tRNA + A + H2O. In terms of biological role, catalyzes oxygen-dependent 5-hydroxyuridine (ho5U) modification at position 34 in tRNAs. The chain is tRNA uridine(34) hydroxylase from Bacillus cereus (strain ZK / E33L).